We begin with the raw amino-acid sequence, 470 residues long: Cell division protein FtsP (470 aa).

The segment at residues 1–27 (MSLSRRQFIQASGIALCAGAVPLKASA) is a signal peptide (tat-type signal). The Plastocyanin-like domain occupies 229-287 (VRLRLLNASNSRRYQLQMSDGRPLHVISGDQGFLPAPVSVKQLSLAPGERREILVDMSN).

The protein belongs to the FtsP family. Post-translationally, predicted to be exported by the Tat system. The position of the signal peptide cleavage has not been experimentally proven.

The protein localises to the periplasm. In terms of biological role, cell division protein that is required for growth during stress conditions. May be involved in protecting or stabilizing the divisomal assembly under conditions of stress. This Shigella dysenteriae serotype 1 (strain Sd197) protein is Cell division protein FtsP.